We begin with the raw amino-acid sequence, 341 residues long: Casein kinase I isoform alpha (341 aa).

The 269-residue stretch at 16 to 284 (YKLIRKIGSG…YLRQLFRILF (269 aa)) folds into the Protein kinase domain. Residues 22–30 (IGSGSFGDI) and K45 each bind ATP. The active-site Proton acceptor is the D135. The segment covering 306–320 (QSQSSGVPGTNTTTQ) has biased composition (polar residues). The disordered stretch occupies residues 306–341 (QSQSSGVPGTNTTTQGATVPSAGVPAGVAPGGTTPQ). Residues 321 to 341 (GATVPSAGVPAGVAPGGTTPQ) show a composition bias toward low complexity.

The protein belongs to the protein kinase superfamily. CK1 Ser/Thr protein kinase family. Casein kinase I subfamily.

The enzyme catalyses L-seryl-[protein] + ATP = O-phospho-L-seryl-[protein] + ADP + H(+). It carries out the reaction L-threonyl-[protein] + ATP = O-phospho-L-threonyl-[protein] + ADP + H(+). This chain is Casein kinase I isoform alpha (kin-19), found in Caenorhabditis elegans.